A 156-amino-acid polypeptide reads, in one-letter code: Lipoprotein signal peptidase (156 aa).

A run of 3 helical transmembrane segments spans residues 5–25, 64–84, and 89–109; these read FKFIFYFWGAFVLVFVLDQWV, YLHLALIVVLFIYLFWQKTLL, and IAFGMMLGAGVSNLLDRFIHG. Catalysis depends on residues D113 and D130. Residues 122 to 142 traverse the membrane as a helical segment; that stretch reads NFAIFNVADVMINISVALILI.

Belongs to the peptidase A8 family.

The protein resides in the cell inner membrane. The enzyme catalyses Release of signal peptides from bacterial membrane prolipoproteins. Hydrolyzes -Xaa-Yaa-Zaa-|-(S,diacylglyceryl)Cys-, in which Xaa is hydrophobic (preferably Leu), and Yaa (Ala or Ser) and Zaa (Gly or Ala) have small, neutral side chains.. Its pathway is protein modification; lipoprotein biosynthesis (signal peptide cleavage). Functionally, this protein specifically catalyzes the removal of signal peptides from prolipoproteins. The polypeptide is Lipoprotein signal peptidase (Campylobacter jejuni subsp. jejuni serotype O:6 (strain 81116 / NCTC 11828)).